We begin with the raw amino-acid sequence, 335 residues long: V-set and immunoglobulin domain-containing protein 1 (335 aa).

The first 21 residues, 1 to 21 (MFPTMLKIFPILATLAGHVHG), serve as a signal peptide directing secretion. In terms of domain architecture, Ig-like V-type spans 22-136 (VVVTVPEKTV…SQKSVIVNVL (115 aa)). At 22-233 (VVVTVPEKTV…DLTSMHSDGN (212 aa)) the chain is on the extracellular side. Intrachain disulfides connect Cys43-Cys115 and Cys160-Cys210. The region spanning 139–226 (PSKPFCKIEG…GNSTCELDLT (88 aa)) is the Ig-like C2-type domain. Residues 234-254 (IVAGALIGAILAAVIICAIVW) traverse the membrane as a helical segment. Residues 255–335 (VLTKKAKKKK…QKEETAGSSF (81 aa)) lie on the Cytoplasmic side of the membrane. A disordered region spans residues 266–335 (SSNEMQVMAQ…QKEETAGSSF (70 aa)). Residues 268–306 (NEMQVMAQKQSNAEYAQVPNEENTPATAVLPSNATNEQP) are compositionally biased toward polar residues. The segment covering 319-335 (NDEKHEVQKEETAGSSF) has biased composition (basic and acidic residues).

In terms of tissue distribution, expressed in thymocytes.

Its subcellular location is the membrane. The protein is V-set and immunoglobulin domain-containing protein 1 (VSIG1) of Gallus gallus (Chicken).